Here is a 97-residue protein sequence, read N- to C-terminus: MSRKCELTGVGVLYGNNVSHSQRKTRRRFEPNLRSIKFRSDITDEVYRLSVNARCIRSVEKAGGFDAYILKANDDILSSAARAIKQKIIHIKAAKSL.

The protein belongs to the bacterial ribosomal protein bL28 family.

The chain is Large ribosomal subunit protein bL28 from Rickettsia prowazekii (strain Madrid E).